The following is a 285-amino-acid chain: Neuralized-like protein 2 (285 aa).

Residues 1-28 form a disordered region; the sequence is MADPSEHVGLGGPRSPARPEPPPTRFHQ. The NHR domain occupies 23-244; sequence PTRFHQVHGA…STKSVRLVQL (222 aa). Residues 250-285 enclose the SOCS box domain; sequence SLQTLCRLVIHKRVVHRLAIDVLHLPKGLKDFCKYE.

Probable component the ECS(NEURL2) E3 ubiquitin-protein ligase complex consisting of ELOB/Elongin B, ELOC/Elongin C, CUL5, RBX1 and NEURL2. Interacts with CTNNB1. As to expression, expressed specifically in skeletal and cardiac muscles.

It localises to the cytoplasm. It participates in protein modification; protein ubiquitination. Its function is as follows. Plays an important role in the process of myofiber differentiation and maturation. Probable substrate-recognition component of a SCF-like ECS (Elongin BC-CUL2/5-SOCS-box protein) E3 ubiquitin-protein ligase complex, which mediates the ubiquitination of proteins. Probably contributes to catalysis through recognition and positioning of the substrate and the ubiquitin-conjugating enzyme. During myogenesis, controls the ubiquitination and degradation of the specific pool of CTNNB1/beta-catenin located at the sarcolemma. The protein is Neuralized-like protein 2 (Neurl2) of Mus musculus (Mouse).